A 231-amino-acid polypeptide reads, in one-letter code: NADH-ubiquinone oxidoreductase chain 4 (231 aa).

The next 6 helical transmembrane spans lie at 1-21, 34-54, 63-85, 89-111, 118-138, and 156-176; these read PIAG…YGII, LFLP…LTCL, IAYS…TPWG, AMAL…NTTY, ILIL…WWLL, and LLIM…LGLS.

Belongs to the complex I subunit 4 family.

The protein localises to the mitochondrion membrane. The catalysed reaction is a ubiquinone + NADH + 5 H(+)(in) = a ubiquinol + NAD(+) + 4 H(+)(out). In terms of biological role, core subunit of the mitochondrial membrane respiratory chain NADH dehydrogenase (Complex I) that is believed to belong to the minimal assembly required for catalysis. Complex I functions in the transfer of electrons from NADH to the respiratory chain. The immediate electron acceptor for the enzyme is believed to be ubiquinone. The sequence is that of NADH-ubiquinone oxidoreductase chain 4 (MT-ND4) from Ovophis okinavensis (Ryukyu Island pit viper).